The chain runs to 384 residues: S-adenosylmethionine synthase (384 aa).

Position 15 (His15) interacts with ATP. A Mg(2+)-binding site is contributed by Asp17. Residue Glu43 coordinates K(+). L-methionine contacts are provided by Glu56 and Gln99. Positions 99-109 (QSPDINQGVDR) are flexible loop. ATP contacts are provided by residues 164–166 (DAK), 230–231 (RF), Asp239, 245–246 (RK), Ala262, and Lys266. Asp239 is a binding site for L-methionine. An L-methionine-binding site is contributed by Lys270.

It belongs to the AdoMet synthase family. In terms of assembly, homotetramer; dimer of dimers. It depends on Mg(2+) as a cofactor. K(+) is required as a cofactor.

The protein resides in the cytoplasm. The enzyme catalyses L-methionine + ATP + H2O = S-adenosyl-L-methionine + phosphate + diphosphate. The protein operates within amino-acid biosynthesis; S-adenosyl-L-methionine biosynthesis; S-adenosyl-L-methionine from L-methionine: step 1/1. Functionally, catalyzes the formation of S-adenosylmethionine (AdoMet) from methionine and ATP. The overall synthetic reaction is composed of two sequential steps, AdoMet formation and the subsequent tripolyphosphate hydrolysis which occurs prior to release of AdoMet from the enzyme. This Salmonella choleraesuis (strain SC-B67) protein is S-adenosylmethionine synthase.